Reading from the N-terminus, the 162-residue chain is Ribonuclease P protein component (162 aa).

The disordered stretch occupies residues 1 to 67 (MDEKDLAAQP…GGKLVSLKGD (67 aa)). Residues 21–31 (GPHEDPRRQEG) are compositionally biased toward basic and acidic residues.

It belongs to the RnpA family. In terms of assembly, consists of a catalytic RNA component (M1 or rnpB) and a protein subunit.

It catalyses the reaction Endonucleolytic cleavage of RNA, removing 5'-extranucleotides from tRNA precursor.. Functionally, RNaseP catalyzes the removal of the 5'-leader sequence from pre-tRNA to produce the mature 5'-terminus. It can also cleave other RNA substrates such as 4.5S RNA. The protein component plays an auxiliary but essential role in vivo by binding to the 5'-leader sequence and broadening the substrate specificity of the ribozyme. The sequence is that of Ribonuclease P protein component from Thermus brockianus.